The sequence spans 247 residues: Adenosylcobinamide-GDP ribazoletransferase (247 aa).

Helical transmembrane passes span 34 to 54 (IITF…VFMV), 59 to 79 (CGVP…TGGF), 113 to 133 (GGLA…ELAL), 138 to 158 (ILAS…LLMY), and 194 to 214 (VLLP…AIFI).

This sequence belongs to the CobS family. Mg(2+) is required as a cofactor.

The protein localises to the cell inner membrane. It carries out the reaction alpha-ribazole + adenosylcob(III)inamide-GDP = adenosylcob(III)alamin + GMP + H(+). The catalysed reaction is alpha-ribazole 5'-phosphate + adenosylcob(III)inamide-GDP = adenosylcob(III)alamin 5'-phosphate + GMP + H(+). Its pathway is cofactor biosynthesis; adenosylcobalamin biosynthesis; adenosylcobalamin from cob(II)yrinate a,c-diamide: step 7/7. Joins adenosylcobinamide-GDP and alpha-ribazole to generate adenosylcobalamin (Ado-cobalamin). Also synthesizes adenosylcobalamin 5'-phosphate from adenosylcobinamide-GDP and alpha-ribazole 5'-phosphate. The polypeptide is Adenosylcobinamide-GDP ribazoletransferase (Escherichia coli O7:K1 (strain IAI39 / ExPEC)).